The chain runs to 129 residues: M-zodatoxin-Lt8b (129 aa).

Residues 1 to 20 (MKYFVVALALVAAFACIAES) form the signal peptide. Residues 21 to 60 (KPAESEHELAEVEEENELADLEDAVWLEHLADLSDLEEAR) constitute a propeptide that is removed on maturation. A Processing quadruplet motif motif is present at residues 57–60 (EEAR).

Cleavage of the propeptide depends on the processing quadruplet motif (XXXR, with at least one of X being E). In terms of tissue distribution, expressed by the venom gland.

The protein localises to the secreted. Insecticidal, cytolytic and antimicrobial peptide. Forms voltage-dependent, ion-permeable channels in membranes. At high concentration causes cell membrane lysis. The sequence is that of M-zodatoxin-Lt8b (cit 1-2) from Lachesana tarabaevi (Spider).